We begin with the raw amino-acid sequence, 73 residues long: DNA-directed RNA polymerase subunit omega (73 aa).

Belongs to the RNA polymerase subunit omega family. In terms of assembly, the RNAP catalytic core consists of 2 alpha, 1 beta, 1 beta' and 1 omega subunit. When a sigma factor is associated with the core the holoenzyme is formed, which can initiate transcription.

It catalyses the reaction RNA(n) + a ribonucleoside 5'-triphosphate = RNA(n+1) + diphosphate. Its function is as follows. Promotes RNA polymerase assembly. Latches the N- and C-terminal regions of the beta' subunit thereby facilitating its interaction with the beta and alpha subunits. The protein is DNA-directed RNA polymerase subunit omega of Clostridium novyi (strain NT).